The chain runs to 192 residues: Pyruvate kinase (192 aa).

Position 41 (R41) interacts with substrate. N43, S45, D75, and T76 together coordinate K(+). Residue 43–46 (NFSH) participates in ATP binding.

It belongs to the pyruvate kinase family. The cofactor is Mg(2+). K(+) serves as cofactor.

It carries out the reaction pyruvate + ATP = phosphoenolpyruvate + ADP + H(+). It participates in carbohydrate degradation; glycolysis; pyruvate from D-glyceraldehyde 3-phosphate: step 5/5. This is Pyruvate kinase (pyk) from Spiroplasma citri.